Here is a 104-residue protein sequence, read N- to C-terminus: Large ribosomal subunit protein uL24 (104 aa).

This sequence belongs to the universal ribosomal protein uL24 family. As to quaternary structure, part of the 50S ribosomal subunit.

Its function is as follows. One of two assembly initiator proteins, it binds directly to the 5'-end of the 23S rRNA, where it nucleates assembly of the 50S subunit. Functionally, one of the proteins that surrounds the polypeptide exit tunnel on the outside of the subunit. In Shewanella amazonensis (strain ATCC BAA-1098 / SB2B), this protein is Large ribosomal subunit protein uL24.